The sequence spans 91 residues: ATP synthase epsilon chain (91 aa).

The protein belongs to the ATPase epsilon chain family. As to quaternary structure, F-type ATPases have 2 components, CF(1) - the catalytic core - and CF(0) - the membrane proton channel. CF(1) has five subunits: alpha(3), beta(3), gamma(1), delta(1), epsilon(1). CF(0) has three main subunits: a, b and c.

It localises to the cell membrane. In terms of biological role, produces ATP from ADP in the presence of a proton gradient across the membrane. In Micrococcus luteus (strain ATCC 4698 / DSM 20030 / JCM 1464 / CCM 169 / CCUG 5858 / IAM 1056 / NBRC 3333 / NCIMB 9278 / NCTC 2665 / VKM Ac-2230) (Micrococcus lysodeikticus), this protein is ATP synthase epsilon chain (atpC).